A 173-amino-acid chain; its full sequence is Alpha-crystallin A chain (173 aa).

M1 carries the post-translational modification N-acetylmethionine. Residues M1–E63 form a required for complex formation with BFSP1 and BFSP2 region. At Q6 the chain carries Deamidated glutamine; partial. At S45 the chain carries Phosphoserine. Q50 bears the Deamidated glutamine; partial mark. One can recognise a sHSP domain in the interval L52–S162. K70 and K99 each carry N6-acetyllysine. Position 100 (H100) interacts with Zn(2+). Residue N101 is modified to Deamidated asparagine; partial. 2 residues coordinate Zn(2+): E102 and H107. Phosphoserine is present on S122. At N123 the chain carries Deamidated asparagine; partial. The tract at residues P144–S173 is disordered. Residues G153–P167 are compositionally biased toward basic and acidic residues. H154 provides a ligand contact to Zn(2+). S162 carries an O-linked (GlcNAc) serine glycan.

This sequence belongs to the small heat shock protein (HSP20) family. As to quaternary structure, heteromer composed of three CRYAA and one CRYAB subunits. Inter-subunit bridging via zinc ions enhances stability, which is crucial as there is no protein turn over in the lens. Can also form homodimers and homotetramers (dimers of dimers) which serve as the building blocks of homooligomers. Within homooligomers, the zinc-binding motif is created from residues of 3 different molecules. His-100 and Glu-102 from one molecule are ligands of the zinc ion, and His-107 and His-154 residues from additional molecules complete the site with tetrahedral coordination geometry. Part of a complex required for lens intermediate filament formation composed of BFSP1, BFSP2 and CRYAA. In terms of processing, acetylation at Lys-70 may increase chaperone activity. Post-translationally, undergoes age-dependent proteolytical cleavage at the C-terminus.

The protein resides in the cytoplasm. The protein localises to the nucleus. Functionally, contributes to the transparency and refractive index of the lens. Acts as a chaperone, preventing aggregation of various proteins under a wide range of stress conditions. Required for the correct formation of lens intermediate filaments as part of a complex composed of BFSP1, BFSP2 and CRYAA. The chain is Alpha-crystallin A chain (CRYAA) from Neovison vison (American mink).